The following is a 241-amino-acid chain: Probable transcriptional regulatory protein Reut_A2522 (241 aa).

The protein belongs to the TACO1 family.

The protein resides in the cytoplasm. This is Probable transcriptional regulatory protein Reut_A2522 from Cupriavidus pinatubonensis (strain JMP 134 / LMG 1197) (Cupriavidus necator (strain JMP 134)).